We begin with the raw amino-acid sequence, 326 residues long: MALTSSVKEELSRLDIKKSSVRKAEVSAMLRFAGGLHIISGRIVIEAEVDLASTARRLRAAIAEVYGHQSEIIVVSGGGLRRGNRYVVRVVRDGEALARQTGLLDARGRPVRGLPSAVVNGSAADAEAVWRGAFLAHGSLTEPGRSSAMEVTCPGPESALALVGAARRLGIQAKAREVRGVDRVVIRDGDTIAALLTRMGAHDALMVWEERRMRKEVRATANRLANFDDANLRRSAQAAVAAGARVDRALEILGDDVPDHLKYAGELRVAHKQASLDELGRLADPPMTKDAIAGRIRRLLAMADKRALDLGIPGTEANVTPEMLDE.

Positions 275–308 form a DNA-binding region, H-T-H motif; it reads SLDELGRLADPPMTKDAIAGRIRRLLAMADKRAL.

This sequence belongs to the WhiA family.

Its function is as follows. Involved in cell division and chromosome segregation. This is Probable cell division protein WhiA from Arthrobacter sp. (strain FB24).